The sequence spans 434 residues: MKRTMLYLSLLAVSCSVSAAKYPVLTESSPEKAGFNVERLNQMDRWISQQVDAGYPGVNLLIIKDNQIVYRKAWGAAKKYDGSVLMAQPVKATTGTLYDLASNTKMYATNFALQKLMSEGKLHPDDLIAKYISGFADSPNDTIKGKNTLRISDLLHHSGGFPADPQYPNKAVAGALYSQDKGQTLEMIKRTPLEYQPGSKHIYSDVDYMLLGFIVESVTGQPLDRYVEESIYRPLGLTHTVFNPLLKGFKPQQIAATELNGNTRDGVIHFPNIRTSTHWGQVHDEKAFYSMGGVSGHAGLFSNTGDIAVLMQTMLNGGGYGDVQLFSAETVKMFTTSSKEDATFGLGWRVNGNATMTPTFGTLASPQTYGHTGWTGTVTVIDPVNHMAIVMLSNKPHSPVADPQKNPNMFESGQLPIATYGWVVDQVYAALKQK.

A helical; Signal-anchor transmembrane segment spans residues 7-25 (YLSLLAVSCSVSAAKYPVL).

The protein belongs to the peptidase S12 family. YfeW subfamily.

The protein resides in the cell inner membrane. The catalysed reaction is Preferential cleavage: (Ac)2-L-Lys-D-Ala-|-D-Ala. Also transpeptidation of peptidyl-alanyl moieties that are N-acyl substituents of D-alanine.. This chain is Putative D-alanyl-D-alanine carboxypeptidase, found in Escherichia coli O157:H7.